A 401-amino-acid chain; its full sequence is Elongation factor Tu (401 aa).

The 202-residue stretch at 10–211 folds into the tr-type G domain; the sequence is KPHLNIGTIG…AVDTYVPNPT (202 aa). Residues 19 to 26 form a G1 region; the sequence is GHVDHGKT. 19-26 provides a ligand contact to GTP; the sequence is GHVDHGKT. A Mg(2+)-binding site is contributed by Thr-26. The G2 stretch occupies residues 62–66; that stretch reads GITIA. Residues 83 to 86 are G3; that stretch reads DCPG. Residues 83 to 87 and 138 to 141 contribute to the GTP site; these read DCPGH and NKAD. The G4 stretch occupies residues 138–141; the sequence is NKAD. Residues 179–181 form a G5 region; sequence SAL.

It belongs to the TRAFAC class translation factor GTPase superfamily. Classic translation factor GTPase family. EF-Tu/EF-1A subfamily. Monomer.

It localises to the cytoplasm. It carries out the reaction GTP + H2O = GDP + phosphate + H(+). In terms of biological role, GTP hydrolase that promotes the GTP-dependent binding of aminoacyl-tRNA to the A-site of ribosomes during protein biosynthesis. The protein is Elongation factor Tu of Leptospira biflexa serovar Patoc (strain Patoc 1 / Ames).